Reading from the N-terminus, the 141-residue chain is Large ribosomal subunit protein uL11A (141 aa).

Belongs to the universal ribosomal protein uL11 family. As to quaternary structure, part of the ribosomal stalk of the 50S ribosomal subunit. Interacts with L10 and the large rRNA to form the base of the stalk. L10 forms an elongated spine to which L12 dimers bind in a sequential fashion forming a multimeric L10(L12)X complex. One or more lysine residues are methylated.

Functionally, forms part of the ribosomal stalk which helps the ribosome interact with GTP-bound translation factors. This is Large ribosomal subunit protein uL11A from Bacillus cereus (strain ATCC 14579 / DSM 31 / CCUG 7414 / JCM 2152 / NBRC 15305 / NCIMB 9373 / NCTC 2599 / NRRL B-3711).